Here is a 212-residue protein sequence, read N- to C-terminus: Ribosomal RNA small subunit methyltransferase G (212 aa).

S-adenosyl-L-methionine-binding positions include Gly-80, Leu-85, 131 to 132 (AE), and Arg-146.

It belongs to the methyltransferase superfamily. RNA methyltransferase RsmG family.

It localises to the cytoplasm. The catalysed reaction is guanosine(527) in 16S rRNA + S-adenosyl-L-methionine = N(7)-methylguanosine(527) in 16S rRNA + S-adenosyl-L-homocysteine. In terms of biological role, specifically methylates the N7 position of guanine in position 527 of 16S rRNA. The chain is Ribosomal RNA small subunit methyltransferase G from Xanthomonas axonopodis pv. citri (strain 306).